The sequence spans 285 residues: Acetyl-coenzyme A carboxylase carboxyl transferase subunit beta (285 aa).

In terms of domain architecture, CoA carboxyltransferase N-terminal spans Ile-29–Asn-285. Residues Cys-33, Cys-36, Cys-52, and Cys-55 each contribute to the Zn(2+) site. A C4-type zinc finger spans residues Cys-33 to Cys-55.

It belongs to the AccD/PCCB family. As to quaternary structure, acetyl-CoA carboxylase is a heterohexamer composed of biotin carboxyl carrier protein (AccB), biotin carboxylase (AccC) and two subunits each of ACCase subunit alpha (AccA) and ACCase subunit beta (AccD). Requires Zn(2+) as cofactor.

It localises to the cytoplasm. The catalysed reaction is N(6)-carboxybiotinyl-L-lysyl-[protein] + acetyl-CoA = N(6)-biotinyl-L-lysyl-[protein] + malonyl-CoA. It functions in the pathway lipid metabolism; malonyl-CoA biosynthesis; malonyl-CoA from acetyl-CoA: step 1/1. Its function is as follows. Component of the acetyl coenzyme A carboxylase (ACC) complex. Biotin carboxylase (BC) catalyzes the carboxylation of biotin on its carrier protein (BCCP) and then the CO(2) group is transferred by the transcarboxylase to acetyl-CoA to form malonyl-CoA. This is Acetyl-coenzyme A carboxylase carboxyl transferase subunit beta from Staphylococcus epidermidis (strain ATCC 35984 / DSM 28319 / BCRC 17069 / CCUG 31568 / BM 3577 / RP62A).